We begin with the raw amino-acid sequence, 215 residues long: Programmed cell death protein 10 homolog (215 aa).

The protein belongs to the PDCD10 family. As to quaternary structure, interacts with gck-1. Expressed in pharynx, intestine, germline, vulva and excretory canals.

The protein resides in the cytoplasm. Its subcellular location is the apical cell membrane. In terms of biological role, involved in excretory canal elongation during postembryonic development. Plays a role in promoting Golgi stability, ER integrity and vesicle transport probably by regulating the activation of Rho GTPase cdc-42. Involved in fertility. In Caenorhabditis elegans, this protein is Programmed cell death protein 10 homolog.